The following is a 424-amino-acid chain: Glutamyl-tRNA reductase (424 aa).

Substrate contacts are provided by residues 49 to 52, Ser-105, 110 to 112, and Gln-116; these read TCNR and EPQ. Cys-50 acts as the Nucleophile in catalysis. An NADP(+)-binding site is contributed by 185–190; sequence GSGETA.

Belongs to the glutamyl-tRNA reductase family. In terms of assembly, homodimer.

It carries out the reaction (S)-4-amino-5-oxopentanoate + tRNA(Glu) + NADP(+) = L-glutamyl-tRNA(Glu) + NADPH + H(+). It functions in the pathway porphyrin-containing compound metabolism; protoporphyrin-IX biosynthesis; 5-aminolevulinate from L-glutamyl-tRNA(Glu): step 1/2. Catalyzes the NADPH-dependent reduction of glutamyl-tRNA(Glu) to glutamate 1-semialdehyde (GSA). The sequence is that of Glutamyl-tRNA reductase from Legionella pneumophila (strain Paris).